Reading from the N-terminus, the 411-residue chain is Pyruvate dehydrogenase E1 component subunit alpha, mitochondrial (411 aa).

Residues 1-29 constitute a mitochondrion transit peptide; the sequence is MFSRAVRLSRAALPIRVASQRVPIAARRS. Pyruvate contacts are provided by H111, Y137, R138, G184, V186, D215, G216, A217, N244, and Y246. The thiamine diphosphate site is built by Y137, R138, G184, V186, D215, G216, A217, and N244. D215 provides a ligand contact to Mg(2+). Residues N244 and Y246 each coordinate Mg(2+). H311 contributes to the thiamine diphosphate binding site.

In terms of assembly, eukaryotic pyruvate dehydrogenase (PDH) complexes are organized as a core consisting of the oligomeric dihydrolipoamide acetyl-transferase (E2), around which are arranged multiple copies of pyruvate dehydrogenase (E1), dihydrolipoamide dehydrogenase (E3) and protein X (E3BP) bound by non-covalent bonds. The Chaetomium thermophilum PDH complex contains 60 E2 units, 12 E3BP units, about 20 E1 units, and 12 or more E3 units. The units are organized in 1 E2 60-mer, 4 E3BP trimers, about 20 E1 tetramers, and a maximum of 12 E3 dimers. Pyruvate dehydrogenase (E1) is active as a tetramer of 2 alpha and 2 beta subunits. The E3BP trimers are bound inside the icosahedral core with tetrahedral symmetry. Thiamine diphosphate is required as a cofactor. The cofactor is Mg(2+).

It localises to the mitochondrion. The enzyme catalyses N(6)-[(R)-lipoyl]-L-lysyl-[protein] + pyruvate + H(+) = N(6)-[(R)-S(8)-acetyldihydrolipoyl]-L-lysyl-[protein] + CO2. In terms of biological role, the 10-megadalton pyruvate dehydrogenase complex contains multiple copies of three enzymatic components: pyruvate dehydrogenase (E1), dihydrolipoamide acetyltransferase (E2) and lipoamide dehydrogenase (E3) and catalyzes the overall oxidative decarboxylation of pyruvate to form acetyl-CoA and CO(2). Within the complex, pyruvate and thiamine pyrophosphate (TPP or vitamin B1) are bound by pyruvate dehydrogenase E1 subunits alpha and beta and pyruvate is decarboxylated leading to the 2-carbon hydrohyethyl bound to TPP. The E2 component contains covalently-bound lipoyl cofactors and transfers the hydroxyethyl group from TPP to an oxidized form of covalently bound lipoamide, and the resulting acetyl group is then transferred to free coenzyme A to form acetyl-CoA and reduced dihydrolipoamide-E2. Finally, the flavoprotein dihydrolipoamide dehydrogenase (E3) re-oxidizes the lipoyl group of dihydrolipoamide-E2 to form lipoamide-E2 and NADH. A fourth subunit, E3BP, is responsible for tethering E3 in proximity to the core, forming the entire metabolon. In Chaetomium thermophilum (strain DSM 1495 / CBS 144.50 / IMI 039719) (Thermochaetoides thermophila), this protein is Pyruvate dehydrogenase E1 component subunit alpha, mitochondrial.